A 254-amino-acid chain; its full sequence is Methyl-CpG-binding domain-containing protein 11 (254 aa).

The 71-residue stretch at 4–74 (EEEVVSVELP…AEFDWTTSGT (71 aa)) folds into the MBD domain. The segment at 56 to 254 (KSHPGNPAIA…EKTAEGEATG (199 aa)) is disordered. Basic and acidic residues-rich tracts occupy residues 80–97 (RISE…EPPK), 107–130 (SKKD…KDTE), 151–162 (ETERVNDAKENI), and 178–254 (ESMK…EATG). Ser-116 is modified (phosphoserine).

Expressed in leaves (around hydathodes), buds, flowers (carpels and pollen grains), stems (around nodes), siliques, mature seeds and roots.

It is found in the nucleus. Transcriptional regulator that binds DNA independently of its methylation status. Required during plant organogenesis and development. The chain is Methyl-CpG-binding domain-containing protein 11 (MBD11) from Arabidopsis thaliana (Mouse-ear cress).